A 201-amino-acid polypeptide reads, in one-letter code: UPF0301 protein Rleg2_0617 (201 aa).

This sequence belongs to the UPF0301 (AlgH) family.

The protein is UPF0301 protein Rleg2_0617 of Rhizobium leguminosarum bv. trifolii (strain WSM2304).